We begin with the raw amino-acid sequence, 522 residues long: MWVEILVGSSAAIISGAAGYLLSKKIEKDKLKIYEEQARAKAKAIEHEAEKILQNAQVQVKEAELELKRDFEKKLEELKRDYEERFNELMEKEMSLKQMFKDELKHITLEKQEIKAEREEINRLKNEYEELKKRYQEKYQEVLEALQQQAGLTLEEAKNLILQKAEEESRLEIANIVRKYEEEAKREAKRRANYIIAQATTRFAGEFAAERLINTVSIPSEDIKGRIIGKEGRNIKTLEMLLGVDIIIDDTPNAIILSSFNLYRRAIATKVIELLVEDGRIQPSRIEEIYEKVKEEFDQQLLEEGENIVIDLGIGLIHPEIVKLIGRLKFRASYGQNALGHSLEVAHLAGIMAAEMGGDEVMAKRAGLLHDIGKALTHEYSGSHVDLGAEICKRYKEPDVVINAIYAHHGHEEPRSIEAAAVCAADTLSAARPGARREVLEAFLKRVQAIEEIALSKPGVKKAYAINAGREVRVIVNADLVNDNEAVLLAKEIAKDIETGVQYPGEIKVNVIRENRAIEYAR.

A helical transmembrane segment spans residues 2-22 (WVEILVGSSAAIISGAAGYLL). The KH domain maps to 212–278 (LINTVSIPSE…TKVIELLVED (67 aa)). Residues 338 to 431 (ALGHSLEVAH…VCAADTLSAA (94 aa)) form the HD domain.

This sequence belongs to the RNase Y family.

It is found in the cell membrane. Endoribonuclease that initiates mRNA decay. The protein is Ribonuclease Y of Nitratiruptor sp. (strain SB155-2).